The following is a 208-amino-acid chain: Small ribosomal subunit protein uS4 (208 aa).

Residues 98–158 form the S4 RNA-binding domain; it reads RRLDNVVYRL…EKSRKIACIN (61 aa).

Belongs to the universal ribosomal protein uS4 family. As to quaternary structure, part of the 30S ribosomal subunit. Contacts protein S5. The interaction surface between S4 and S5 is involved in control of translational fidelity.

In terms of biological role, one of the primary rRNA binding proteins, it binds directly to 16S rRNA where it nucleates assembly of the body of the 30S subunit. Its function is as follows. With S5 and S12 plays an important role in translational accuracy. The polypeptide is Small ribosomal subunit protein uS4 (Geobacter sulfurreducens (strain ATCC 51573 / DSM 12127 / PCA)).